The sequence spans 226 residues: MAMNNILGLFAHSPLKPLQKHSEKVTECSDLLIPFFQTTFSKNWEQAEEKRLEISQCEREADSLKREIRLKLPRGLFLPIDRTDLLELVTQQDKLANYAKDIAGRMIGRQFGIPEEMQEEFLHYVKRSLDAIHQAHRVIEEMDKLLETGFKGRELKLVNDMIQELDSIEDDTDQMQIKLRKMLYTIESRYNPIDVMFLYKIIEWVGVLADQAQRVGSRIELMLARS.

This sequence belongs to the UPF0111 family.

The chain is UPF0111 protein HI_1603 from Haemophilus influenzae (strain ATCC 51907 / DSM 11121 / KW20 / Rd).